The primary structure comprises 176 residues: Small ribosomal subunit protein uS5 (176 aa).

The 64-residue stretch at 14–77 (MQEKLIHINR…DQARRWMTSI (64 aa)) folds into the S5 DRBM domain.

This sequence belongs to the universal ribosomal protein uS5 family. As to quaternary structure, part of the 30S ribosomal subunit. Contacts proteins S4 and S8.

In terms of biological role, with S4 and S12 plays an important role in translational accuracy. Located at the back of the 30S subunit body where it stabilizes the conformation of the head with respect to the body. This Acidithiobacillus ferrooxidans (strain ATCC 23270 / DSM 14882 / CIP 104768 / NCIMB 8455) (Ferrobacillus ferrooxidans (strain ATCC 23270)) protein is Small ribosomal subunit protein uS5.